A 1133-amino-acid chain; its full sequence is Protein cordon-bleu (1133 aa).

Residues Met-1–Lys-11 show a composition bias toward pro residues. The interval Met-1–His-25 is disordered. Phosphoserine is present on residues Ser-31, Ser-34, Ser-196, Ser-219, Ser-256, and Ser-278. Disordered regions lie at residues Ala-246–Gly-393 and Gln-442–Ser-568. Residues Cys-272–Ser-301 show a composition bias toward polar residues. The KKRRAP 1 signature appears at Lys-307–Pro-312. A phosphoserine mark is found at Ser-330 and Ser-333. The KKRRAP 2 motif lies at Lys-340–Pro-345. Residues Pro-345–Val-358 show a composition bias toward pro residues. Phosphoserine is present on Ser-356. Over residues Asn-361–Lys-371 the composition is skewed to basic and acidic residues. 2 stretches are compositionally biased toward polar residues: residues Thr-382 to Gly-393 and Gln-442 to Ile-464. Ser-447 bears the Phosphoserine mark. Residues Ser-512–Met-524 are compositionally biased toward basic and acidic residues. Position 614 is a phosphoserine (Ser-614). The tract at residues Ala-664–Val-720 is disordered. Polar residues-rich tracts occupy residues Pro-665–Glu-674 and Thr-686–Ser-696. Phosphoserine is present on Ser-924. Disordered stretches follow at residues Pro-942–Phe-961 and His-990–Ala-1018. 2 WH2 domains span residues Leu-981–Thr-1001 and Glu-1021–Val-1041. Residues Gly-993 to Pro-1010 show a composition bias toward basic and acidic residues. The disordered stretch occupies residues Asp-1063–Ala-1091. Residues Leu-1072–Thr-1083 are compositionally biased toward pro residues. Position 1099 is a phosphoserine (Ser-1099). The WH2 3 domain maps to Ala-1109–Val-1129.

As to quaternary structure, identified in a complex composed of ACTA1, COBL, GSN AND TMSB4X. Identified in a complex composed of COBL, PACSIN1 and WASL. Interacts with PACSIN1, PACSIN2 and PACSIN3. Interacts (via WH2 domains) with actin monomers. Interacts with both PACSIN1 and DBNL. As to expression, detected in brain (at protein level).

It is found in the cell membrane. The protein localises to the cytoplasm. Its subcellular location is the cytoskeleton. The protein resides in the cell projection. It localises to the ruffle. It is found in the cytosol. Functionally, plays an important role in the reorganization of the actin cytoskeleton. Binds to and sequesters actin monomers (G actin). Nucleates actin polymerization by assembling three actin monomers in cross-filament orientation and thereby promotes growth of actin filaments at the barbed end. Can also mediate actin depolymerization at barbed ends and severing of actin filaments. Promotes formation of cell ruffles. Regulates dendrite branching in Purkinje cells. Regulates neuron morphogenesis and increases branching of axons and dendrites. The polypeptide is Protein cordon-bleu (Cobl) (Rattus norvegicus (Rat)).